Reading from the N-terminus, the 696-residue chain is F-box/LRR-repeat protein 5 (696 aa).

The segment at 1 to 159 (MAPFPDEVDV…IKKQVIAQHS (159 aa)) is hemerythrin-like. Histidine 15, histidine 57, glutamate 58, glutamate 61, histidine 80, histidine 126, and glutamate 130 together coordinate Fe(3+). The F-box domain maps to 205 to 251 (STHISQLPTEILLCLFRYLGPEDLCHCGQVCSAWSDLAKTGSLWRHL). LRR repeat units follow at residues 343 to 367 (SSTV…LDLT), 368 to 395 (QTDV…DLSG), 396 to 421 (CEKL…TCSE), 582 to 612 (CSSG…SLSG), 613 to 640 (CYQV…NLSG), and 641 to 666 (CLLI…HFYY). Positions 667, 681, 691, and 692 each coordinate [2Fe-2S] cluster.

Part of a SCF (SKP1-cullin-F-box) protein ligase complex. It depends on [2Fe-2S] cluster as a cofactor. In terms of processing, ubiquitinated upon iron and oxygen depletion, leading to its degradation by the proteasome. Ubiquitination is regulated by the hemerythrin-like region that acts as an oxygen and iron sensor.

The protein resides in the cytoplasm. Its subcellular location is the perinuclear region. It localises to the nucleus. The protein operates within protein modification; protein ubiquitination. Its function is as follows. Component of some SCF (SKP1-cullin-F-box) protein ligase complex that plays a central role in iron homeostasis by promoting the ubiquitination and subsequent degradation of ireb2/irp2. Upon high iron and oxygen level, it specifically recognizes and binds ireb2/irp2, promoting its ubiquitination and degradation by the proteasome. This chain is F-box/LRR-repeat protein 5 (fbxl5), found in Salmo salar (Atlantic salmon).